We begin with the raw amino-acid sequence, 133 residues long: Snaclec echicetin subunit alpha (133 aa).

3 disulfide bridges follow: Cys4/Cys15, Cys31/Cys127, and Cys102/Cys119. The region spanning 11–128 (YEGHCYQLFR…CEFKFPFVCK (118 aa)) is the C-type lectin domain.

The protein belongs to the snaclec family. As to quaternary structure, heterodimer of subunits alpha and beta; disulfide-linked. Forms an active complex with the pentameric immunoglobuline Mkappa (IgMkappa). In terms of tissue distribution, expressed by the venom gland.

It is found in the secreted. In terms of biological role, echicetin itself inhibits aggregation of washed platelets induced by vWF, thrombin or alboaggregin-A. However, when complexed with the pentameric plasma immunoglobulin Mkappa (IgMkappa), echicetin binds specifically to GPIb and activates platelets. This is caused by P-selectin expression and activation of alpha-IIb/beta-3 as well as tyrosine phosphorylation of several signal transduction molecules, including p53/56(LYN), p64, p72(SYK), p70 to p90, and p120. In vivo, it induces thrombocytopenia when injected into mice, probably accounting of activation of platelets rather than inhibition. The sequence is that of Snaclec echicetin subunit alpha from Echis carinatus sochureki (Saw-scaled viper).